The sequence spans 390 residues: Chalcone synthase (390 aa).

Residue cysteine 164 is part of the active site.

Belongs to the thiolase-like superfamily. Chalcone/stilbene synthases family.

It carries out the reaction (E)-4-coumaroyl-CoA + 3 malonyl-CoA + 3 H(+) = 2',4,4',6'-tetrahydroxychalcone + 3 CO2 + 4 CoA. It functions in the pathway secondary metabolite biosynthesis; flavonoid biosynthesis. Its function is as follows. The primary product of this enzyme is 4,2',4',6'-tetrahydroxychalcone (also termed naringenin-chalcone or chalcone) which undergoes enzyme-catalyzed or spontaneous isomerization into naringenin. This chain is Chalcone synthase, found in Hypericum androsaemum (Tutsan).